A 448-amino-acid chain; its full sequence is Integrator complex subunit 15 (448 aa).

This sequence belongs to the Integrator subunit 15 family. Component of the Integrator complex, composed of core subunits INTS1, INTS2, INTS3, INTS4, INTS5, INTS6, INTS7, INTS8, INTS9/RC74, INTS10, INTS11/CPSF3L, INTS12, INTS13, INTS14 and INTS15. The core complex associates with protein phosphatase 2A subunits PPP2CA and PPP2R1A, to form the Integrator-PP2A (INTAC) complex. INTS15 is part of the tail subcomplex, composed of INTS10, INTS13, INTS14 and INTS15.

It is found in the nucleus. The protein localises to the chromosome. Functionally, component of the integrator complex, a multiprotein complex that terminates RNA polymerase II (Pol II) transcription in the promoter-proximal region of genes. The integrator complex provides a quality checkpoint during transcription elongation by driving premature transcription termination of transcripts that are unfavorably configured for transcriptional elongation: the complex terminates transcription by (1) catalyzing dephosphorylation of the C-terminal domain (CTD) of Pol II subunit POLR2A/RPB1 and SUPT5H/SPT5, (2) degrading the exiting nascent RNA transcript via endonuclease activity and (3) promoting the release of Pol II from bound DNA. The integrator complex is also involved in terminating the synthesis of non-coding Pol II transcripts, such as enhancer RNAs (eRNAs), small nuclear RNAs (snRNAs), telomerase RNAs and long non-coding RNAs (lncRNAs). INTS15 is part of the integrator tail module that acts as a platform for the recruitment of transcription factors at promoters. Within the integrator complex, INTS15 is required to bridge different integrator modules. The chain is Integrator complex subunit 15 from Mus musculus (Mouse).